Consider the following 308-residue polypeptide: Porphobilinogen deaminase (308 aa).

Residue C241 is modified to S-(dipyrrolylmethanemethyl)cysteine.

This sequence belongs to the HMBS family. As to quaternary structure, monomer. Dipyrromethane is required as a cofactor.

It catalyses the reaction 4 porphobilinogen + H2O = hydroxymethylbilane + 4 NH4(+). Its pathway is porphyrin-containing compound metabolism; protoporphyrin-IX biosynthesis; coproporphyrinogen-III from 5-aminolevulinate: step 2/4. Its function is as follows. Tetrapolymerization of the monopyrrole PBG into the hydroxymethylbilane pre-uroporphyrinogen in several discrete steps. This Staphylococcus aureus (strain Mu50 / ATCC 700699) protein is Porphobilinogen deaminase.